A 174-amino-acid chain; its full sequence is NADH-ubiquinone oxidoreductase chain 6 (174 aa).

4 helical membrane passes run 25–45, 48–68, 82–102, and 143–163; these read SMGLMLLIQTFLTCLITGIYV, FWFSYVLFLIFLGGMLILFIY, FKLTMFSLVLFSLSMVIFFIL, and LITLLLINYLFLTLLVTVKIT.

This sequence belongs to the complex I subunit 6 family.

It localises to the mitochondrion membrane. It carries out the reaction a ubiquinone + NADH + 5 H(+)(in) = a ubiquinol + NAD(+) + 4 H(+)(out). Functionally, core subunit of the mitochondrial membrane respiratory chain NADH dehydrogenase (Complex I) that is believed to belong to the minimal assembly required for catalysis. Complex I functions in the transfer of electrons from NADH to the respiratory chain. The immediate electron acceptor for the enzyme is believed to be ubiquinone. The protein is NADH-ubiquinone oxidoreductase chain 6 (mt:ND6) of Anopheles gambiae (African malaria mosquito).